Reading from the N-terminus, the 157-residue chain is Crossover junction endodeoxyribonuclease RuvC (157 aa).

Residues D7, E70, and D142 contribute to the active site. Mg(2+) contacts are provided by D7, E70, and D142.

This sequence belongs to the RuvC family. As to quaternary structure, homodimer which binds Holliday junction (HJ) DNA. The HJ becomes 2-fold symmetrical on binding to RuvC with unstacked arms; it has a different conformation from HJ DNA in complex with RuvA. In the full resolvosome a probable DNA-RuvA(4)-RuvB(12)-RuvC(2) complex forms which resolves the HJ. Mg(2+) is required as a cofactor.

Its subcellular location is the cytoplasm. The enzyme catalyses Endonucleolytic cleavage at a junction such as a reciprocal single-stranded crossover between two homologous DNA duplexes (Holliday junction).. The RuvA-RuvB-RuvC complex processes Holliday junction (HJ) DNA during genetic recombination and DNA repair. Endonuclease that resolves HJ intermediates. Cleaves cruciform DNA by making single-stranded nicks across the HJ at symmetrical positions within the homologous arms, yielding a 5'-phosphate and a 3'-hydroxyl group; requires a central core of homology in the junction. The consensus cleavage sequence is 5'-(A/T)TT(C/G)-3'. Cleavage occurs on the 3'-side of the TT dinucleotide at the point of strand exchange. HJ branch migration catalyzed by RuvA-RuvB allows RuvC to scan DNA until it finds its consensus sequence, where it cleaves and resolves the cruciform DNA. The chain is Crossover junction endodeoxyribonuclease RuvC from Synechococcus sp. (strain RCC307).